The sequence spans 293 residues: Lysosomal amino acid transporter 1 homolog (293 aa).

At 1–37 (MVWRTLVASNFSTCPNGSIQWIWDVFGECAQDGWDEA) the chain is on the lumenal side. A glycan (N-linked (GlcNAc...) asparagine) is linked at asparagine 10. The PQ-loop 1 domain maps to 34–100 (WDEASVALGL…LADQLPLQTY (67 aa)). Residues 38–58 (SVALGLVSIFCFAASTFPQYI) traverse the membrane as a helical segment. Residues 59 to 71 (KACKTGNMDQALS) lie on the Cytoplasmic side of the membrane. The chain crosses the membrane as a helical span at residues 72 to 92 (LWFLLGWIGGDSCNLIGSFLA). At 93–96 (DQLP) the chain is on the lumenal side. A helical transmembrane segment spans residues 97–117 (LQTYTAVYYVLADLLMLTLYF). Residues 118–126 (HYKFKKQPS) are Cytoplasmic-facing. Residues 127 to 147 (LLSAPINSVLLFILGTVCITP) form a helical membrane-spanning segment. The Lumenal portion of the chain corresponds to 148 to 182 (LLSSTDPVAVPREGFRGRTLLSVEPGNKPFTKKEV). The helical transmembrane segment at 183–203 (VGFVIGSASSVLYLLSRLPQI) threads the bilayer. One can recognise a PQ-loop 2 domain in the interval 191 to 243 (SSVLYLLSRLPQIRTNFVRQSTQGISYSLFALVMLGNTLYGLSVLLKNPEVGQ). Residues 204-214 (RTNFVRQSTQG) lie on the Cytoplasmic side of the membrane. Residues 215–235 (ISYSLFALVMLGNTLYGLSVL) traverse the membrane as a helical segment. Residues 236 to 254 (LKNPEVGQSEGSYLLHHLP) lie on the Lumenal side of the membrane. A helical membrane pass occupies residues 255–275 (WLVGSLGVLLLDTIISIQFLV). At 276-293 (YRSHDADAASEREPLLPS) the chain is on the cytoplasmic side. The short motif at 290-291 (LL) is the Di-leucine motif element.

This sequence belongs to the laat-1 family.

It localises to the lysosome membrane. In terms of biological role, amino acid transporter that specifically mediates the pH-dependent export of the cationic amino acids arginine, histidine and lysine from lysosomes. The protein is Lysosomal amino acid transporter 1 homolog (Slc66a1) of Rattus norvegicus (Rat).